The primary structure comprises 213 residues: Urease accessory protein UreG (213 aa).

Position 12-19 (glycine 12–threonine 19) interacts with GTP.

The protein belongs to the SIMIBI class G3E GTPase family. UreG subfamily. In terms of assembly, homodimer. UreD, UreF and UreG form a complex that acts as a GTP-hydrolysis-dependent molecular chaperone, activating the urease apoprotein by helping to assemble the nickel containing metallocenter of UreC. The UreE protein probably delivers the nickel.

The protein localises to the cytoplasm. Functionally, facilitates the functional incorporation of the urease nickel metallocenter. This process requires GTP hydrolysis, probably effectuated by UreG. The chain is Urease accessory protein UreG from Marinomonas sp. (strain MWYL1).